The sequence spans 1130 residues: Integrin alpha-6 (1130 aa).

The N-terminal stretch at Met-1–Ala-23 is a signal peptide. Over Phe-24–Ser-1050 the chain is Extracellular. 7 FG-GAP repeats span residues Glu-30–Thr-95, Asn-101–Asp-166, Asp-176–Met-229, Glu-283–His-339, Leu-340–Asn-402, Val-403–Thr-458, and Lys-459–Asn-518. Asn-78 carries an N-linked (GlcNAc...) asparagine glycan. 3 disulfides stabilise this stretch: Cys-86/Cys-94, Cys-131/Cys-154, and Cys-175/Cys-188. 2 N-linked (GlcNAc...) asparagine glycosylation sites follow: Asn-223 and Asn-323. 4 residues coordinate Ca(2+): Asp-363, Asn-365, Asp-367, and Asp-371. N-linked (GlcNAc...) asparagine glycosylation is present at Asn-409. The Ca(2+) site is built by Asp-425, Asn-427, Asp-429, Tyr-431, Asp-433, Asp-480, Asp-482, Asn-484, Tyr-486, and Asp-488. 4 disulfide bridges follow: Cys-528–Cys-535, Cys-541–Cys-601, Cys-665–Cys-671, and Cys-765–Cys-776. Asn-770, Asn-787, Asn-930, and Asn-966 each carry an N-linked (GlcNAc...) asparagine glycan. 2 disulfides stabilise this stretch: Cys-920–Cys-967 and Cys-973–Cys-978. The N-linked (GlcNAc...) asparagine glycan is linked to Asn-997. A helical transmembrane segment spans residues Gly-1051–Trp-1076. 2 positions are modified to phosphoserine: Val-1059 and Gly-1064. The interval Lys-1077–Arg-1083 is interaction with HPS5. Residues Lys-1077 to Ser-1130 lie on the Cytoplasmic side of the membrane. The S-palmitoyl cysteine; by DHHC3 moiety is linked to residue Cys-1078. Residues Gly-1079 to Arg-1083 carry the GFFKR motif motif. The residue at position 1103 (Arg-1103) is a Phosphoserine.

Belongs to the integrin alpha chain family. Heterodimer of an alpha and a beta subunit. The alpha subunit is composed of a heavy and a light chain linked by a disulfide bond. Alpha-6 associates with either beta-1 (ITGB1) or beta-4 (ITGB4) to form ITGA6:ITGB1 and ITGA6:ITGB4, respectively. ITGA6:ITGB1 is found in a complex with CD9; interaction takes place in oocytes and is involved in sperm-egg fusion. ITGA6:ITGB4 is found in a ternary complex with NRG1 and ERBB3. ITGA6:ITGB4 is found in a ternary complex with IGF1 and IGF1R. ITGA6:ITGB4 interacts with IGF2. Interacts with ADAM9. Interacts with RAB21. Interacts with MDK. ITGA6:ITGB1 interacts with MDK; this interaction mediates MDK-induced neurite outgrowth. Interacts with CD82; this interaction down-regulates ITGA6-mediated cell adhesion. Isoforms containing segment A, but not segment B, are the major targets for PMA-induced phosphorylation. Phosphorylation occurs on 'Ser-1103' of isoform alpha-6X1X2A. Phosphorylation is not required for the induction of integrin alpha-6A/beta-1 high affinity but may reduce the affinity for ligand. In terms of processing, undergoes PLAU-mediated cleavage at residues Arg-634-635-Arg in a time-dependent manner to produce processed integrin alpha-6 (alpha6p). Production of alpha6p enhances prostate cancer cell invasion and migration. Post-translationally, palmitoylation by DHHC3 enhances stability and cell surface expression. Integrin alpha-6/beta-4 is predominantly expressed by epithelia. Isoforms containing segment X1 are ubiquitously expressed. Isoforms containing segment X1X2 are expressed in heart, kidney, placenta, colon, duodenum, myoblasts and myotubes, and in a limited number of cell lines; they are always coexpressed with the ubiquitous isoform containing segment X1. In some tissues (e.g. Salivary gland), isoforms containing cytoplasmic segment A and isoforms containing segment B are detected while in others, only isoforms containing one cytoplasmic segment are found (segment A in epidermis and segment B in kidney). Processed integrin alpha-6: Expressed at low levels in normal prostate tissue with elevated levels in prostate cancer tissue (at protein level).

Its subcellular location is the cell membrane. Integrin alpha-6/beta-1 (ITGA6:ITGB1) is a receptor for laminin on platelets. Integrin alpha-6/beta-1 (ITGA6:ITGB1) is present in oocytes and is involved in sperm-egg fusion. Integrin alpha-6/beta-4 (ITGA6:ITGB4) is a receptor for laminin in epithelial cells and it plays a critical structural role in the hemidesmosome. ITGA6:ITGB4 binds to NRG1 (via EGF domain) and this binding is essential for NRG1-ERBB signaling. ITGA6:ITGB4 binds to IGF1 and this binding is essential for IGF1 signaling. ITGA6:ITGB4 binds to IGF2 and this binding is essential for IGF2 signaling. The chain is Integrin alpha-6 (ITGA6) from Homo sapiens (Human).